We begin with the raw amino-acid sequence, 246 residues long: Protein SRL3 (246 aa).

Polar residues predominate over residues 49–61 (SISEAQDSPTSAP). Disordered regions lie at residues 49–68 (SISEAQDSPTSAPSPDGNED) and 200–229 (HAKSNRVDNVNVSPLRWSSHRRTQSTQENS). Residue S212 is modified to Phosphoserine.

As to quaternary structure, interacts with CLN2. In terms of processing, phosphorylated by CDC28, probably in association with G1 cyclin CLN2.

Its subcellular location is the cytoplasm. Weakly suppresses a RAD53 null mutation when overexpressed. This Saccharomyces cerevisiae (strain ATCC 204508 / S288c) (Baker's yeast) protein is Protein SRL3 (SRL3).